Here is a 487-residue protein sequence, read N- to C-terminus: Kynureninase 1 (487 aa).

Pyridoxal 5'-phosphate is bound by residues L147, T148, 175–178, S232, D261, H264, and Y286; that span reads FPSD. K287 carries the post-translational modification N6-(pyridoxal phosphate)lysine. The pyridoxal 5'-phosphate site is built by W327 and N355.

The protein belongs to the kynureninase family. In terms of assembly, homodimer. Pyridoxal 5'-phosphate serves as cofactor.

Its subcellular location is the cytoplasm. It catalyses the reaction L-kynurenine + H2O = anthranilate + L-alanine + H(+). The enzyme catalyses 3-hydroxy-L-kynurenine + H2O = 3-hydroxyanthranilate + L-alanine + H(+). It participates in amino-acid degradation; L-kynurenine degradation; L-alanine and anthranilate from L-kynurenine: step 1/1. The protein operates within cofactor biosynthesis; NAD(+) biosynthesis; quinolinate from L-kynurenine: step 2/3. Its function is as follows. Catalyzes the cleavage of L-kynurenine (L-Kyn) and L-3-hydroxykynurenine (L-3OHKyn) into anthranilic acid (AA) and 3-hydroxyanthranilic acid (3-OHAA), respectively. In Aspergillus oryzae (strain ATCC 42149 / RIB 40) (Yellow koji mold), this protein is Kynureninase 1 (bna5-1).